The following is a 132-amino-acid chain: Small ribosomal subunit protein uS8 (132 aa).

It belongs to the universal ribosomal protein uS8 family. Part of the 30S ribosomal subunit. Contacts proteins S5 and S12.

In terms of biological role, one of the primary rRNA binding proteins, it binds directly to 16S rRNA central domain where it helps coordinate assembly of the platform of the 30S subunit. This chain is Small ribosomal subunit protein uS8, found in Granulibacter bethesdensis (strain ATCC BAA-1260 / CGDNIH1).